A 40-amino-acid chain; its full sequence is Sapecin-C (40 aa).

3 disulfide bridges follow: Cys-3–Cys-30, Cys-16–Cys-36, and Cys-20–Cys-38.

It belongs to the invertebrate defensin family. Type 1 subfamily. As to expression, hemocytes and fat body.

Its subcellular location is the secreted. In terms of biological role, sapecins, which are potent bactericidal proteins, are produced in response to injury. Sapecin C is cytotoxic to Gram-positive bacteria. In Sarcophaga peregrina (Flesh fly), this protein is Sapecin-C.